A 179-amino-acid chain; its full sequence is Large ribosomal subunit protein uL5 (179 aa).

It belongs to the universal ribosomal protein uL5 family. As to quaternary structure, part of the 50S ribosomal subunit; contacts the 5S rRNA and probably tRNA. Forms a bridge to the 30S subunit in the 70S ribosome.

Its function is as follows. This is one of the proteins that bind and probably mediate the attachment of the 5S RNA into the large ribosomal subunit, where it forms part of the central protuberance. In the 70S ribosome it contacts protein S13 of the 30S subunit (bridge B1b), connecting the 2 subunits; this bridge is implicated in subunit movement. May contact the P site tRNA; the 5S rRNA and some of its associated proteins might help stabilize positioning of ribosome-bound tRNAs. This chain is Large ribosomal subunit protein uL5, found in Pyrobaculum aerophilum (strain ATCC 51768 / DSM 7523 / JCM 9630 / CIP 104966 / NBRC 100827 / IM2).